The sequence spans 629 residues: tRNA uridine 5-carboxymethylaminomethyl modification enzyme MnmG (629 aa).

13–18 is an FAD binding site; that stretch reads GGGHAG. Residue 273–287 participates in NAD(+) binding; sequence GPRYCPSIEDKIHRF.

This sequence belongs to the MnmG family. Homodimer. Heterotetramer of two MnmE and two MnmG subunits. FAD serves as cofactor.

It is found in the cytoplasm. Functionally, NAD-binding protein involved in the addition of a carboxymethylaminomethyl (cmnm) group at the wobble position (U34) of certain tRNAs, forming tRNA-cmnm(5)s(2)U34. The protein is tRNA uridine 5-carboxymethylaminomethyl modification enzyme MnmG of Shewanella baltica (strain OS195).